We begin with the raw amino-acid sequence, 372 residues long: L-selectin (372 aa).

Residues 1–28 (MIFPRKCQSTQRDLWNIFKLWGWTMLCC) form the signal peptide. A propeptide spanning residues 29-38 (DFLAHHGTDC) is cleaved from the precursor. At 39–332 (WTYHYSENPM…FSMIKEGDYN (294 aa)) the chain is on the extracellular side. In terms of domain architecture, C-type lectin spans 55–155 (RFCRENYTDL…ACHKPKAALC (101 aa)). Intrachain disulfides connect Cys-57–Cys-155, Cys-128–Cys-147, Cys-128–Cys-160, Cys-160–Cys-171, Cys-165–Cys-180, Cys-182–Cys-191, Cys-197–Cys-241, Cys-227–Cys-254, Cys-259–Cys-303, and Cys-289–Cys-316. N-linked (GlcNAc...) asparagine glycans are attached at residues Asn-60 and Asn-104. Glu-118, Asn-120, Glu-126, Asn-143, and Asp-144 together coordinate Ca(2+). The 37-residue stretch at 156 to 192 (YTASCQPWSCSGHGECVEIINNYTCNCDVGYYGPQCQ) folds into the EGF-like domain. The N-linked (GlcNAc...) asparagine glycan is linked to Asn-177. 2 Sushi domains span residues 195–256 (IQCE…TCQV) and 257–318 (IQCE…ICQK). Asn-226, Asn-232, Asn-246, and Asn-271 each carry an N-linked (GlcNAc...) asparagine glycan. Residues 333–355 (PLFIPVAVIVTAFSGLAFIIWLA) form a helical membrane-spanning segment. Topologically, residues 356–372 (RRLKKGKKSKKSMDDPY) are cytoplasmic.

Belongs to the selectin/LECAM family. Interaction with SELPLG/PSGL1 and PODXL2 is required for promoting recruitment and rolling of leukocytes. This interaction is dependent on the sialyl Lewis X glycan modification of SELPLG and PODXL2, and tyrosine sulfation modifications of SELPLG. Sulfation on 'Tyr-51' of SELPLG is important for L-selectin binding. N-glycosylated.

Its subcellular location is the cell membrane. Calcium-dependent lectin that mediates cell adhesion by binding to glycoproteins on neighboring cells. Mediates the adherence of lymphocytes to endothelial cells of high endothelial venules in peripheral lymph nodes. Promotes initial tethering and rolling of leukocytes in endothelia. The sequence is that of L-selectin (SELL) from Papio hamadryas (Hamadryas baboon).